The following is a 523-amino-acid chain: Cytochrome P450 52-N1 (523 aa).

A helical transmembrane segment spans residues 5 to 25 (AVLGAFAAFLLYMDVLYPFVI). Cys-469 serves as a coordination point for heme.

This sequence belongs to the cytochrome P450 family. It depends on heme as a cofactor.

Its subcellular location is the membrane. The enzyme catalyses an omega-methyl-long-chain fatty acid + reduced [NADPH--hemoprotein reductase] + O2 = an omega-hydroxy-long-chain fatty acid + oxidized [NADPH--hemoprotein reductase] + H2O + H(+). It catalyses the reaction (9Z,12Z)-octadecadienoate + reduced [NADPH--hemoprotein reductase] + O2 = 18-hydroxy-(9Z,12Z)-octadecadienoate + oxidized [NADPH--hemoprotein reductase] + H2O + H(+). The catalysed reaction is (9Z)-octadecenoate + reduced [NADPH--hemoprotein reductase] + O2 = 18-hydroxy-(9Z)-octadecenoate + oxidized [NADPH--hemoprotein reductase] + H2O + H(+). It carries out the reaction hexadecanoate + reduced [NADPH--hemoprotein reductase] + O2 = 16-hydroxyhexadecanoate + oxidized [NADPH--hemoprotein reductase] + H2O + H(+). The enzyme catalyses (9Z)-hexadecenoate + reduced [NADPH--hemoprotein reductase] + O2 = (9Z)-16-hydroxyhexadec-9-enoate + oxidized [NADPH--hemoprotein reductase] + H2O + H(+). It catalyses the reaction octadecanoate + reduced [NADPH--hemoprotein reductase] + O2 = 18-hydroxyoctadecanoate + oxidized [NADPH--hemoprotein reductase] + H2O + H(+). Catalyzes the terminal (at the omega-position) hydroxylation of a fatty acid. Probably involved in alkane metabolism. Linoleic acid is the preferred substrate, but it acts on various other C-16, C-18 and C-20 saturated and unsaturated fatty acids, namely palmitic, palmitoleic, stearic, oleic, alpha-linoleic, arachidonic and myristic acid. This Starmerella bombicola (Yeast) protein is Cytochrome P450 52-N1.